Reading from the N-terminus, the 459-residue chain is tRNA modification GTPase MnmE (459 aa).

Positions 22, 85, and 124 each coordinate (6S)-5-formyl-5,6,7,8-tetrahydrofolate. The 160-residue stretch at 221 to 380 (GLSTVIVGKP…LEIQIRDLFF (160 aa)) folds into the TrmE-type G domain. A K(+)-binding site is contributed by N231. GTP-binding positions include 231 to 236 (NVGKSS), 250 to 256 (TEVAGTT), and 275 to 278 (DTAG). S235 contacts Mg(2+). Residues T250, V252, and T255 each coordinate K(+). T256 serves as a coordination point for Mg(2+). K459 serves as a coordination point for (6S)-5-formyl-5,6,7,8-tetrahydrofolate.

The protein belongs to the TRAFAC class TrmE-Era-EngA-EngB-Septin-like GTPase superfamily. TrmE GTPase family. Homodimer. Heterotetramer of two MnmE and two MnmG subunits. K(+) is required as a cofactor.

The protein resides in the cytoplasm. Exhibits a very high intrinsic GTPase hydrolysis rate. Involved in the addition of a carboxymethylaminomethyl (cmnm) group at the wobble position (U34) of certain tRNAs, forming tRNA-cmnm(5)s(2)U34. This Staphylococcus aureus (strain MSSA476) protein is tRNA modification GTPase MnmE.